A 338-amino-acid chain; its full sequence is Ketol-acid reductoisomerase (NADP(+)) (338 aa).

Residues 1-181 (MQVYYDKDCD…GGGRTGIIET (181 aa)) form the KARI N-terminal Rossmann domain. NADP(+) is bound by residues 24–27 (YGSQ), Arg-47, Ser-50, Ser-52, and 82–85 (DEFQ). The active site involves His-107. Gly-133 provides a ligand contact to NADP(+). The KARI C-terminal knotted domain maps to 182–327 (TFKDETETDL…EKLRGMMPWI (146 aa)). Asp-190, Glu-194, Glu-226, and Glu-230 together coordinate Mg(2+). Ser-251 lines the substrate pocket.

The protein belongs to the ketol-acid reductoisomerase family. Mg(2+) is required as a cofactor.

It catalyses the reaction (2R)-2,3-dihydroxy-3-methylbutanoate + NADP(+) = (2S)-2-acetolactate + NADPH + H(+). The enzyme catalyses (2R,3R)-2,3-dihydroxy-3-methylpentanoate + NADP(+) = (S)-2-ethyl-2-hydroxy-3-oxobutanoate + NADPH + H(+). Its pathway is amino-acid biosynthesis; L-isoleucine biosynthesis; L-isoleucine from 2-oxobutanoate: step 2/4. It functions in the pathway amino-acid biosynthesis; L-valine biosynthesis; L-valine from pyruvate: step 2/4. In terms of biological role, involved in the biosynthesis of branched-chain amino acids (BCAA). Catalyzes an alkyl-migration followed by a ketol-acid reduction of (S)-2-acetolactate (S2AL) to yield (R)-2,3-dihydroxy-isovalerate. In the isomerase reaction, S2AL is rearranged via a Mg-dependent methyl migration to produce 3-hydroxy-3-methyl-2-ketobutyrate (HMKB). In the reductase reaction, this 2-ketoacid undergoes a metal-dependent reduction by NADPH to yield (R)-2,3-dihydroxy-isovalerate. This chain is Ketol-acid reductoisomerase (NADP(+)), found in Alcanivorax borkumensis (strain ATCC 700651 / DSM 11573 / NCIMB 13689 / SK2).